Here is a 382-residue protein sequence, read N- to C-terminus: Sad1-interacting factor 2 (382 aa).

At serine 135 the chain carries Phosphoserine. A helical membrane pass occupies residues 356–376; that stretch reads EWIVVILMGLLVLIALFSIVV.

The protein belongs to the RMD1/sif2 family. As to quaternary structure, interacts with sad1.

The protein resides in the nucleus membrane. Required for sporulation where it is believed to have a role in meiotic nuclear division. The sequence is that of Sad1-interacting factor 2 (sif2) from Schizosaccharomyces pombe (strain 972 / ATCC 24843) (Fission yeast).